The primary structure comprises 365 residues: Ribosomal RNA large subunit methyltransferase M (365 aa).

S-adenosyl-L-methionine is bound by residues Ser-188, Cys-221–Gly-224, Asp-240, Asp-260, and Asp-277. Lys-306 serves as the catalytic Proton acceptor.

Belongs to the class I-like SAM-binding methyltransferase superfamily. RNA methyltransferase RlmE family. RlmM subfamily. Monomer.

It localises to the cytoplasm. The enzyme catalyses cytidine(2498) in 23S rRNA + S-adenosyl-L-methionine = 2'-O-methylcytidine(2498) in 23S rRNA + S-adenosyl-L-homocysteine + H(+). Catalyzes the 2'-O-methylation at nucleotide C2498 in 23S rRNA. The polypeptide is Ribosomal RNA large subunit methyltransferase M (Proteus mirabilis (strain HI4320)).